The chain runs to 455 residues: Epoxide hydrolase 1 (455 aa).

The helical; Signal-anchor for type III membrane protein transmembrane segment at 1–21 (MWLELVLASLLGFVIYWFVSR) threads the bilayer. Over 22-455 (DKEETLPLGD…RKFVSLAELQ (434 aa)) the chain is Cytoplasmic. Residue Asp-226 is the Nucleophile of the active site. Arg-295 is subject to Dimethylated arginine. Tyr-374 functions as the Proton donor in the catalytic mechanism. His-431 acts as the Proton acceptor in catalysis. The residue at position 439 (Lys-439) is an N6-acetyllysine.

This sequence belongs to the peptidase S33 family.

It is found in the microsome membrane. The protein localises to the endoplasmic reticulum membrane. The enzyme catalyses cis-stilbene oxide + H2O = (1R,2R)-hydrobenzoin. The catalysed reaction is 1-(4-methoxyphenyl)-N-methyl-N-[(3-methyloxetan-3-yl)methyl]methanamine + H2O = 2-{[(4-methoxybenzyl)(methyl)amino]methyl}-2-methylpropane-1,3-diol. It carries out the reaction 8,9-epoxy-(5Z,11Z,14Z)-eicosatrienoate + H2O = 8,9-dihydroxy-(5Z,11Z,14Z)-eicosatrienoate. It catalyses the reaction 11,12-epoxy-(5Z,8Z,14Z)-eicosatrienoate + H2O = 11,12-dihydroxy-(5Z,8Z,14Z)-eicosatrienoate. The enzyme catalyses 2-(5Z,8Z,11Z,14Z-eicosatetraenoyl)-glycerol + H2O = glycerol + (5Z,8Z,11Z,14Z)-eicosatetraenoate + H(+). With respect to regulation, inhibited by 10-hydroxystearamide and methoxy-arachidonyl fluorophosphate. In terms of biological role, biotransformation enzyme that catalyzes the hydrolysis of arene and aliphatic epoxides to less reactive and more water soluble dihydrodiols by the trans addition of water. May play a role in the metabolism of endogenous lipids such as epoxide-containing fatty acids. Metabolizes the abundant endocannabinoid 2-arachidonoylglycerol (2-AG) to free arachidonic acid (AA) and glycerol. Binds 20(S)-hydroxycholesterol (20(S)-OHC). This chain is Epoxide hydrolase 1, found in Rattus norvegicus (Rat).